Reading from the N-terminus, the 187-residue chain is GTP cyclohydrolase 1 (187 aa).

Positions 81, 84, and 152 each coordinate Zn(2+).

This sequence belongs to the GTP cyclohydrolase I family. Toroid-shaped homodecamer, composed of two pentamers of five dimers.

It catalyses the reaction GTP + H2O = 7,8-dihydroneopterin 3'-triphosphate + formate + H(+). It participates in cofactor biosynthesis; 7,8-dihydroneopterin triphosphate biosynthesis; 7,8-dihydroneopterin triphosphate from GTP: step 1/1. The sequence is that of GTP cyclohydrolase 1 from Pyrobaculum aerophilum (strain ATCC 51768 / DSM 7523 / JCM 9630 / CIP 104966 / NBRC 100827 / IM2).